We begin with the raw amino-acid sequence, 494 residues long: UPF0371 protein SPy_1343/M5005_Spy1095 (494 aa).

The protein belongs to the UPF0371 family.

In Streptococcus pyogenes serotype M1, this protein is UPF0371 protein SPy_1343/M5005_Spy1095.